The primary structure comprises 149 residues: UPF0310 protein SSO2595 (149 aa).

It belongs to the UPF0310 family.

The polypeptide is UPF0310 protein SSO2595 (Saccharolobus solfataricus (strain ATCC 35092 / DSM 1617 / JCM 11322 / P2) (Sulfolobus solfataricus)).